Consider the following 468-residue polypeptide: ERO1-like protein alpha (468 aa).

Positions 1 to 23 (MGHRWGFLIVFLGAVGLLGSGYG) are cleaved as a signal peptide. Cystine bridges form between C35–C48, C37–C46, C85–C391, C94–C99, C94–C131, C99–C104, C208–C241, and C394–C397. Phosphoserine is present on residues S106, S143, and S145. FAD-binding residues include R187, T189, and W200. Residues S252 and H255 each contribute to the FAD site. N280 carries N-linked (GlcNAc...) asparagine glycosylation. Residues R287 and R300 each contribute to the FAD site. N384 is a glycosylation site (N-linked (GlcNAc...) asparagine).

It belongs to the EROs family. As to quaternary structure, predominantly monomer. May function both as a monomer and a homodimer. Interacts with PDILT. Interacts with ERP44; the interaction results in retention of ERO1A in the endoplasmic reticulum. The cofactor is FAD. Post-translationally, the Cys-94/Cys-99 and Cys-394/Cys-397 disulfide bonds constitute the redox-active center. The Cys-94/Cys-99 disulfide bond may accept electron from P4HB and funnel them to the active site disulfide Cys-394/Cys-397. The regulatory Cys-99/Cys-104 disulfide bond stabilizes the other regulatory bond Cys-94/Cys-131. Phosphorylated on Ser-145 by FAM20C in the Golgi which increases its enzymatic activity. Phosphorylation is induced by lactation. It is also induced by hypoxia and reductive stress.

Its subcellular location is the endoplasmic reticulum membrane. It localises to the golgi apparatus lumen. The protein resides in the secreted. It is found in the cell projection. The protein localises to the dendrite. Its activity is regulated as follows. Enzyme activity is tightly regulated to prevent the accumulation of reactive oxygen species in the endoplasmic reticulum. Reversibly down-regulated by the formation of disulfide bonds between the active site Cys-94 and Cys-131, and between Cys-99 and Cys-104. Glutathione may be required to regulate its activity in the endoplasmic reticulum. Its function is as follows. Oxidoreductase involved in disulfide bond formation in the endoplasmic reticulum. Efficiently reoxidizes P4HB/PDI, the enzyme catalyzing protein disulfide formation, in order to allow P4HB to sustain additional rounds of disulfide formation. Following P4HB reoxidation, passes its electrons to molecular oxygen via FAD, leading to the production of reactive oxygen species (ROS) in the cell. Required for the proper folding of immunoglobulins. Plays an important role in ER stress-induced, CHOP-dependent apoptosis by activating the inositol 1,4,5-trisphosphate receptor IP3R1. This Sus scrofa (Pig) protein is ERO1-like protein alpha.